A 158-amino-acid chain; its full sequence is Leptin-B (158 aa).

The signal sequence occupies residues 1-19 (MYMPLALVYASFLTLPAST). A disulfide bond links Cys-114 and Cys-158.

The protein belongs to the leptin family. As to expression, highly expressed in the brain and eye. Expressed at low levels in muscle and skin.

It is found in the secreted. May function as part of a signaling pathway that acts to regulate the size of the body fat depot. This chain is Leptin-B, found in Oryzias latipes (Japanese rice fish).